The sequence spans 322 residues: RNA-binding motif protein, X-linked 2 (322 aa).

Lysine 8 participates in a covalent cross-link: Glycyl lysine isopeptide (Lys-Gly) (interchain with G-Cter in SUMO2). The RRM domain occupies 36–114 (AWIFLGGLPY…RTIRVDHVSN (79 aa)). The segment at 134-322 (KGCGARTPSP…SSNPSDRWRH (189 aa)) is disordered. Threonine 140 carries the post-translational modification Phosphothreonine. Serine 149 carries the phosphoserine modification. Residues 155–171 (TKKHKKDKKEKKKKKKE) are compositionally biased toward basic residues. Residues serine 186 and serine 188 each carry the phosphoserine modification. The span at 195-223 (KEKDDTGPKKHSSKNSERAQKSEPREGQK) shows a compositional bias: basic and acidic residues. The residue at position 232 (serine 232) is a Phosphoserine. The segment covering 240 to 274 (RELKKEKPKHEHKSSSRREAREEKTRIRDRGRSSD) has biased composition (basic and acidic residues). Lysine 243 is covalently cross-linked (Glycyl lysine isopeptide (Lys-Gly) (interchain with G-Cter in SUMO2)). At serine 272 the chain carries Phosphoserine. Over residues 289–308 (YRSRSRSRDKSHRHKRARRS) the composition is skewed to basic residues. Serine 314 carries the phosphoserine modification.

Belongs to the IST3 family. In terms of assembly, part of the activated spliceosome B/catalytic step 1 spliceosome, one of the forms of the spliceosome which has a well-formed active site but still cannot catalyze the branching reaction and is composed of at least 52 proteins, the U2, U5 and U6 snRNAs and the pre-mRNA. Component of the minor spliceosome, which splices U12-type introns.

Its subcellular location is the nucleus. In terms of biological role, involved in pre-mRNA splicing as component of the activated spliceosome. As a component of the minor spliceosome, involved in the splicing of U12-type introns in pre-mRNAs. The polypeptide is RNA-binding motif protein, X-linked 2 (RBMX2) (Homo sapiens (Human)).